The following is a 216-amino-acid chain: FMN-dependent NADH:quinone oxidoreductase 2 (216 aa).

Residues S9, 15–17 (SVS), 96–99 (MYNF), and 140–143 (SRGG) contribute to the FMN site.

Belongs to the azoreductase type 1 family. As to quaternary structure, homodimer. The cofactor is FMN.

It catalyses the reaction 2 a quinone + NADH + H(+) = 2 a 1,4-benzosemiquinone + NAD(+). The enzyme catalyses N,N-dimethyl-1,4-phenylenediamine + anthranilate + 2 NAD(+) = 2-(4-dimethylaminophenyl)diazenylbenzoate + 2 NADH + 2 H(+). Quinone reductase that provides resistance to thiol-specific stress caused by electrophilic quinones. In terms of biological role, also exhibits azoreductase activity. Catalyzes the reductive cleavage of the azo bond in aromatic azo compounds to the corresponding amines. This chain is FMN-dependent NADH:quinone oxidoreductase 2, found in Xanthomonas axonopodis pv. citri (strain 306).